We begin with the raw amino-acid sequence, 54 residues long: Potassium channel toxin alpha-KTx 14.3 (54 aa).

A signal peptide spans 1-23 (MKIFFAILLILAVCSMAIWTVNG).

The protein belongs to the short scorpion toxin superfamily. Potassium channel inhibitor family. Alpha-KTx 14 subfamily. Post-translationally, contains 3 disulfide bridges. In terms of tissue distribution, expressed by the venom gland.

The protein resides in the secreted. Potential blocker of potassium channels. The sequence is that of Potassium channel toxin alpha-KTx 14.3 from Olivierus martensii (Manchurian scorpion).